The sequence spans 423 residues: Osteomodulin (423 aa).

An N-terminal signal peptide occupies residues 1-20 (MGFLSPIYVLFFCFGVRVYC). Sulfotyrosine is present on residues tyrosine 22, tyrosine 25, tyrosine 31, tyrosine 39, tyrosine 51, and tyrosine 77. One can recognise an LRRNT domain in the interval 53–91 (VPFYNNILGCAKECFCPTNFPTSMYCDNRKLKTIPIIPM). LRR repeat units follow at residues 92 to 113 (HIQQ…SFIN), 116 to 129 (HLKE…KIKS), 142 to 164 (NLQQ…PKSL), 165 to 184 (ERLL…AMDG), 187 to 207 (NVTM…KEKT), 213 to 233 (KLMQ…GLPS), 234 to 255 (SLMY…YFDK), 258 to 279 (KLHA…IFNL), 281 to 294 (NLIE…KLKQ), 301 to 322 (NLEH…MICP), and 331 to 353 (HLTY…IFFC). N-linked (GlcNAc...) asparagine glycans are attached at residues asparagine 113 and asparagine 121. Asparagine 187 is a glycosylation site (N-linked (GlcNAc...) asparagine). Asparagine 242 and asparagine 278 each carry an N-linked (GlcNAc...) asparagine glycan. N-linked (GlcNAc...) asparagine glycosylation is present at asparagine 316. Cysteines 321 and 353 form a disulfide. Residues 381–406 (RSYQEEEEEDDHDSQDNTLEGQEVSD) are disordered. 2 positions are modified to sulfotyrosine: tyrosine 413 and tyrosine 414.

This sequence belongs to the small leucine-rich proteoglycan (SLRP) family. SLRP class II subfamily. In terms of assembly, binds the alpha(V)beta(3)-integrin. Post-translationally, glycosylated; contains keratan sulfate. In terms of tissue distribution, bone specific.

Its subcellular location is the secreted. It is found in the extracellular space. It localises to the extracellular matrix. Functionally, may be implicated in biomineralization processes. Has a function in binding of osteoblasts via the alpha(V)beta(3)-integrin. This chain is Osteomodulin (Omd), found in Mus musculus (Mouse).